Here is a 470-residue protein sequence, read N- to C-terminus: 1-aminocyclopropane-1-carboxylate synthase 5 (470 aa).

Substrate is bound by residues Glu-47 and Tyr-85. An N6-(pyridoxal phosphate)lysine modification is found at Lys-272. A Phosphoserine modification is found at Ser-461.

It belongs to the class-I pyridoxal-phosphate-dependent aminotransferase family. Homodimer and heterodimer. In vivo, the relevance of heterodimerization with other ACS enzymes is however unsure. Interacts (via its C-terminal region) with FEI1, FEI2, ETO1, EOL1 and EOL2. Interacts with GRF3. Pyridoxal 5'-phosphate is required as a cofactor. May be processed at its C-terminus. Post-translationally, ubiquitinated. The interaction with ETO1 (and possibly EOL1 and EOL2) mediate its proteasome-dependent degradation. Its stability and degradation plays a central role in ethylene biosynthesis. As to expression, expressed in roots and siliques.

The enzyme catalyses S-adenosyl-L-methionine = 1-aminocyclopropane-1-carboxylate + S-methyl-5'-thioadenosine + H(+). The protein operates within alkene biosynthesis; ethylene biosynthesis via S-adenosyl-L-methionine; ethylene from S-adenosyl-L-methionine: step 1/2. 1-aminocyclopropane-1-carboxylate synthase (ACS) enzymes catalyze the conversion of S-adenosyl-L-methionine (SAM) into 1-aminocyclopropane-1-carboxylate (ACC), a direct precursor of ethylene. The protein is 1-aminocyclopropane-1-carboxylate synthase 5 (ACS5) of Arabidopsis thaliana (Mouse-ear cress).